Reading from the N-terminus, the 506-residue chain is Maturase K (506 aa).

It belongs to the intron maturase 2 family. MatK subfamily.

It is found in the plastid. Its subcellular location is the chloroplast. Usually encoded in the trnK tRNA gene intron. Probably assists in splicing its own and other chloroplast group II introns. This is Maturase K from Prunus dulcis (Almond).